A 496-amino-acid polypeptide reads, in one-letter code: Protein RepS (496 aa).

A DNA-binding region spans residues 120 to 141; it reads SDILTTAIDLGFMPTLIIKSDK.

Functionally, essential for replication. The chain is Protein RepS (repS) from Streptococcus pyogenes.